A 348-amino-acid polypeptide reads, in one-letter code: Dihydroorotate dehydrogenase (quinone) (348 aa).

FMN is bound by residues 60-64 (AGLDK) and threonine 84. Lysine 64 is a substrate binding site. 109 to 113 (NRMGF) serves as a coordination point for substrate. Asparagine 137 and asparagine 170 together coordinate FMN. Asparagine 170 is a binding site for substrate. The active-site Nucleophile is the serine 173. Asparagine 175 contacts substrate. The FMN site is built by lysine 215 and threonine 243. 244–245 (NT) is a binding site for substrate. FMN-binding positions include glycine 266, glycine 295, and 316 to 317 (YS).

The protein belongs to the dihydroorotate dehydrogenase family. Type 2 subfamily. As to quaternary structure, monomer. The cofactor is FMN.

It is found in the cell membrane. It catalyses the reaction (S)-dihydroorotate + a quinone = orotate + a quinol. The protein operates within pyrimidine metabolism; UMP biosynthesis via de novo pathway; orotate from (S)-dihydroorotate (quinone route): step 1/1. Functionally, catalyzes the conversion of dihydroorotate to orotate with quinone as electron acceptor. The chain is Dihydroorotate dehydrogenase (quinone) from Nitrosospira multiformis (strain ATCC 25196 / NCIMB 11849 / C 71).